Consider the following 425-residue polypeptide: Fe(2+) transport protein 3, chloroplastic (425 aa).

A helical membrane pass occupies residues 65–85 (FVAIASILLAGAAGVTIPLIG). Residues 86 to 97 (RNRRFLQTDGNL) lie on the Cytoplasmic side of the membrane. Residues 98 to 118 (FVTAKAFAAGVILATGFVHML) traverse the membrane as a helical segment. Residues 119–137 (AGGTEALKNPCLPDFPWSK) are Lumenal-facing. Residues 138–158 (FPFPGFFAMIAALITLFVDFM) form a helical membrane-spanning segment. Residues 159–269 (GTQYYERKQE…GLDAVNGARH (111 aa)) lie on the Cytoplasmic side of the membrane. The chain crosses the membrane as a helical span at residues 270-290 (IVVSQVLELGIVSHSIIIGLS). Residues 291–301 (LGVSQSPCTIR) lie on the Lumenal side of the membrane. A helical transmembrane segment spans residues 302-322 (PLIAALSFHQFFEGFALGGCI). Over 323 to 333 (SQAQFRNKSAT) the chain is Cytoplasmic. Residues 334–354 (IMACFFALTTPIGIGIGTAVA) traverse the membrane as a helical segment. Over 355–369 (SSFNSHSVGALVTEG) the chain is Lumenal. The chain crosses the membrane as a helical span at residues 370–390 (ILDSLSAGILVYMALVDLIAA). Residues 391–404 (DFLSTKMRCNFRLQ) lie on the Cytoplasmic side of the membrane. Residues 405 to 425 (IVSYVMLFLGAGLMSSLAIWA) traverse the membrane as a helical segment.

Belongs to the ZIP transporter (TC 2.A.5) family.

The protein resides in the plastid. It localises to the chloroplast thylakoid membrane. Its function is as follows. May play a role in the transport of iron in the plastids. The polypeptide is Fe(2+) transport protein 3, chloroplastic (IRT3) (Arabidopsis thaliana (Mouse-ear cress)).